The following is a 357-amino-acid chain: DNA polymerase IV (357 aa).

Residues 4–185 (IIHCDCDCFY…LPVERLFGVG (182 aa)) enclose the UmuC domain. Residues D8 and D103 each coordinate Mg(2+). Residue E104 is part of the active site.

This sequence belongs to the DNA polymerase type-Y family. As to quaternary structure, monomer. Mg(2+) serves as cofactor.

The protein resides in the cytoplasm. It catalyses the reaction DNA(n) + a 2'-deoxyribonucleoside 5'-triphosphate = DNA(n+1) + diphosphate. Functionally, poorly processive, error-prone DNA polymerase involved in untargeted mutagenesis. Copies undamaged DNA at stalled replication forks, which arise in vivo from mismatched or misaligned primer ends. These misaligned primers can be extended by PolIV. Exhibits no 3'-5' exonuclease (proofreading) activity. May be involved in translesional synthesis, in conjunction with the beta clamp from PolIII. In Ralstonia nicotianae (strain ATCC BAA-1114 / GMI1000) (Ralstonia solanacearum), this protein is DNA polymerase IV.